Here is a 90-residue protein sequence, read N- to C-terminus: Probable Fe(2+)-trafficking protein (90 aa).

It belongs to the Fe(2+)-trafficking protein family.

In terms of biological role, could be a mediator in iron transactions between iron acquisition and iron-requiring processes, such as synthesis and/or repair of Fe-S clusters in biosynthetic enzymes. This is Probable Fe(2+)-trafficking protein from Pseudomonas fluorescens (strain ATCC BAA-477 / NRRL B-23932 / Pf-5).